The sequence spans 266 residues: 3-methyl-2-oxobutanoate hydroxymethyltransferase (266 aa).

The Mg(2+) site is built by D43 and D82. 3-methyl-2-oxobutanoate contacts are provided by residues 43 to 44 (DS), D82, and K110. A Mg(2+)-binding site is contributed by E112. E179 (proton acceptor) is an active-site residue.

It belongs to the PanB family. Homodecamer; pentamer of dimers. Mg(2+) serves as cofactor.

It localises to the cytoplasm. It catalyses the reaction 3-methyl-2-oxobutanoate + (6R)-5,10-methylene-5,6,7,8-tetrahydrofolate + H2O = 2-dehydropantoate + (6S)-5,6,7,8-tetrahydrofolate. Its pathway is cofactor biosynthesis; (R)-pantothenate biosynthesis; (R)-pantoate from 3-methyl-2-oxobutanoate: step 1/2. Catalyzes the reversible reaction in which hydroxymethyl group from 5,10-methylenetetrahydrofolate is transferred onto alpha-ketoisovalerate to form ketopantoate. This chain is 3-methyl-2-oxobutanoate hydroxymethyltransferase, found in Psychrobacter cryohalolentis (strain ATCC BAA-1226 / DSM 17306 / VKM B-2378 / K5).